Here is a 304-residue protein sequence, read N- to C-terminus: Oxygen-dependent coproporphyrinogen-III oxidase (304 aa).

A substrate-binding site is contributed by S93. A divalent metal cation contacts are provided by H97 and H107. H107 serves as the catalytic Proton donor. 109–111 (NVR) is a binding site for substrate. H146 and H176 together coordinate a divalent metal cation. The interval 241–276 (YVEFNLVYDRGTLFGLQSGGRTESILMSLPPQVRWG) is important for dimerization. 259–261 (GGR) is a substrate binding site.

Belongs to the aerobic coproporphyrinogen-III oxidase family. Homodimer. It depends on a divalent metal cation as a cofactor.

The protein localises to the cytoplasm. The catalysed reaction is coproporphyrinogen III + O2 + 2 H(+) = protoporphyrinogen IX + 2 CO2 + 2 H2O. It participates in porphyrin-containing compound metabolism; protoporphyrin-IX biosynthesis; protoporphyrinogen-IX from coproporphyrinogen-III (O2 route): step 1/1. Functionally, involved in the heme biosynthesis. Catalyzes the aerobic oxidative decarboxylation of propionate groups of rings A and B of coproporphyrinogen-III to yield the vinyl groups in protoporphyrinogen-IX. The protein is Oxygen-dependent coproporphyrinogen-III oxidase of Pseudomonas savastanoi pv. phaseolicola (strain 1448A / Race 6) (Pseudomonas syringae pv. phaseolicola (strain 1448A / Race 6)).